A 493-amino-acid polypeptide reads, in one-letter code: Cytochrome P450 2E1 (493 aa).

298–303 (FAGTET) contributes to the substrate binding site. C437 provides a ligand contact to heme.

Belongs to the cytochrome P450 family. In terms of assembly, interacts with chaperones HSP70 and HSP90; this interaction is required for initial targeting to mitochondria. Requires heme as cofactor.

It is found in the endoplasmic reticulum membrane. Its subcellular location is the microsome membrane. The protein resides in the mitochondrion inner membrane. It carries out the reaction an organic molecule + reduced [NADPH--hemoprotein reductase] + O2 = an alcohol + oxidized [NADPH--hemoprotein reductase] + H2O + H(+). It catalyses the reaction (5Z,8Z,11Z)-eicosatrienoate + reduced [NADPH--hemoprotein reductase] + O2 = 19-hydroxy-(5Z,8Z,11Z)-eicosatrienoate + oxidized [NADPH--hemoprotein reductase] + H2O + H(+). The catalysed reaction is (5Z,8Z,11Z,14Z,17Z)-eicosapentaenoate + reduced [NADPH--hemoprotein reductase] + O2 = 19-hydroxy-(5Z,8Z,11Z,14Z,17Z)-eicosapentaenoate + oxidized [NADPH--hemoprotein reductase] + H2O + H(+). The enzyme catalyses (4Z,7Z,10Z,13Z,16Z,19Z)-docosahexaenoate + reduced [NADPH--hemoprotein reductase] + O2 = 21-hydroxy-(4Z,7Z,10Z,13Z,16Z,19Z)-docosahexaenoate + oxidized [NADPH--hemoprotein reductase] + H2O + H(+). It carries out the reaction dodecanoate + reduced [NADPH--hemoprotein reductase] + O2 = 11-hydroxydodecanoate + oxidized [NADPH--hemoprotein reductase] + H2O + H(+). It catalyses the reaction tetradecanoate + reduced [NADPH--hemoprotein reductase] + O2 = 13-hydroxytetradecanoate + oxidized [NADPH--hemoprotein reductase] + H2O + H(+). The catalysed reaction is 4-nitrophenol + NADPH + O2 + H(+) = 4-nitrocatechol + NADP(+) + H2O. The protein operates within lipid metabolism; fatty acid metabolism. The omega-1 hydroxylase activity is stimulated by cytochrome b5. A cytochrome P450 monooxygenase involved in the metabolism of fatty acids. Mechanistically, uses molecular oxygen inserting one oxygen atom into a substrate, and reducing the second into a water molecule, with two electrons provided by NADPH via cytochrome P450 reductase (NADPH--hemoprotein reductase). Catalyzes the hydroxylation of carbon-hydrogen bonds. Hydroxylates fatty acids specifically at the omega-1 position displaying the highest catalytic activity for saturated fatty acids. May be involved in the oxidative metabolism of xenobiotics. The chain is Cytochrome P450 2E1 (CYP2E1) from Mesocricetus auratus (Golden hamster).